Reading from the N-terminus, the 361-residue chain is MGNIHIQTKSKEYDVYVGKESLSHLTTIVQNMKPSVSNIMIISDEAVASLHLQMVVDALQIEKKVFSFVVPSGEKEKSFENFYAAHTSALENKLDRNSLIIALGGGMIGDLAGFVAASFMRGIRFVQVPTTLLAHDSAVGGKVAINHPLGKNMIGAFHQPEAVVYHTPFLQSLPEKEWRSGYAEVIKHALIGDVKLYHWLKEEVQTLADLRDEKLIHILTKAIPVKANIVAQDETEKGVRAHLNFGHTLGHALEKELGYGNITHGDGVAVGMLFAIFLSEQVYKVNLAYEEMKQWFLKYGYPKMPSDLNVERLVGLMKQDKKANAGAIHMVLMQEYGVVNVVSIPDETVHIALEAFQKDMV.

NAD(+) contacts are provided by residues 72–77 (SGEKEK), 130–131 (TT), K142, and K151. E184, H247, and H264 together coordinate Zn(2+).

Belongs to the sugar phosphate cyclases superfamily. Dehydroquinate synthase family. Co(2+) is required as a cofactor. It depends on Zn(2+) as a cofactor. Requires NAD(+) as cofactor.

The protein resides in the cytoplasm. The catalysed reaction is 7-phospho-2-dehydro-3-deoxy-D-arabino-heptonate = 3-dehydroquinate + phosphate. The protein operates within metabolic intermediate biosynthesis; chorismate biosynthesis; chorismate from D-erythrose 4-phosphate and phosphoenolpyruvate: step 2/7. In terms of biological role, catalyzes the conversion of 3-deoxy-D-arabino-heptulosonate 7-phosphate (DAHP) to dehydroquinate (DHQ). This chain is 3-dehydroquinate synthase, found in Bacillus cereus (strain ATCC 10987 / NRS 248).